Here is a 471-residue protein sequence, read N- to C-terminus: Tripartite motif-containing protein 60 (471 aa).

The RING-type zinc finger occupies Cys16–Arg57. Residues Lys92–Ile133 form a B box-type zinc finger. Positions 97, 100, 119, and 125 each coordinate Zn(2+). The stretch at Glu171–Leu223 forms a coiled coil. The B30.2/SPRY domain maps to Phe277–Glu470.

The protein belongs to the TRIM/RBCC family.

E3 SUMO-protein ligase that mediates SUMOylation of TAB2 leading to inhibition of NF-kappa-B and MAPK pathways by suppressing the TRAF6/TAB2/TAK1 complex. The chain is Tripartite motif-containing protein 60 (TRIM60) from Homo sapiens (Human).